A 404-amino-acid chain; its full sequence is Argininosuccinate synthase (404 aa).

ATP-binding positions include 10–18 (AYSGGLDTS) and Ala-37. Residues Tyr-90 and Ser-95 each contribute to the L-citrulline site. Residue Gly-120 participates in ATP binding. Residues Thr-122, Asn-126, and Asp-127 each coordinate L-aspartate. Asn-126 contributes to the L-citrulline binding site. L-citrulline is bound by residues Arg-130, Ser-180, Ser-189, Glu-265, and Tyr-277.

It belongs to the argininosuccinate synthase family. Type 1 subfamily. As to quaternary structure, homotetramer.

The protein resides in the cytoplasm. It carries out the reaction L-citrulline + L-aspartate + ATP = 2-(N(omega)-L-arginino)succinate + AMP + diphosphate + H(+). Its pathway is amino-acid biosynthesis; L-arginine biosynthesis; L-arginine from L-ornithine and carbamoyl phosphate: step 2/3. The protein is Argininosuccinate synthase of Helicobacter hepaticus (strain ATCC 51449 / 3B1).